The following is a 642-amino-acid chain: Envelope glycoprotein (642 aa).

A signal peptide spans 1–34 (MESPTHPKPSKDKTLSWNLAFLVGILFTIDIGMA). The Extracellular segment spans residues 35–586 (NPSPHQIYNV…FNKSPWFTTL (552 aa)). Residues Asn-43 and Asn-58 are each glycosylated (N-linked (GlcNAc...) asparagine; by host). Disulfide bonds link Cys-125–Cys-147 and Cys-139–Cys-152. Residues 233-283 (PPQAMGPNLVLPDQKPPSRQSQTGSKVATQRPQTNESAPRSVAPTTMGPKR) are disordered. The span at 249 to 270 (PSRQSQTGSKVATQRPQTNESA) shows a compositional bias: polar residues. N-linked (GlcNAc...) asparagine; by host glycosylation is found at Asn-267, Asn-302, and Asn-307. Intrachain disulfides connect Cys-312–Cys-315, Cys-312–Cys-539, and Cys-531–Cys-538. The short motif at 312–315 (CWLC) is the CXXC element. Residues Asn-334, Asn-374, Asn-390, and Asn-410 are each glycosylated (N-linked (GlcNAc...) asparagine; by host). The segment at 448–468 (ISLTVALMLGGLTVGGIAAGV) is fusion peptide. Coiled-coil stretches lie at residues 476–525 (LETA…ILFL) and 535–571 (KEECCFYADHTGLVRDNMAKLRERLKQRQQLFDSQQG). Positions 514-530 (LQNRRGLDILFLQEGGL) are immunosuppression. The CX6CC signature appears at 531 to 539 (CAALKEECC). A helical transmembrane segment spans residues 587–607 (ISSIMGPLLILLLILLFGPCI). Cys-606 is lipidated: S-palmitoyl cysteine; by host. Over 608–642 (LNRLVQFVKDRISVVQALILTQQYQQIKQYDPDRP) the chain is Cytoplasmic.

The mature envelope protein (Env) consists of a trimer of SU-TM heterodimers attached by a labile interchain disulfide bond. Specific enzymatic cleavages in vivo yield mature proteins. Envelope glycoproteins are synthesized as an inactive precursor that is N-glycosylated and processed likely by host cell furin or by a furin-like protease in the Golgi to yield the mature SU and TM proteins. The cleavage site between SU and TM requires the minimal sequence [KR]-X-[KR]-R. The R-peptide is released from the C-terminus of the cytoplasmic tail of the TM protein upon particle formation as a result of proteolytic cleavage by the viral protease. Cleavage of this peptide is required for TM to become fusogenic. In terms of processing, the CXXC motif is highly conserved across a broad range of retroviral envelope proteins. It is thought to participate in the formation of a labile disulfide bond possibly with the CX6CC motif present in the transmembrane protein. Isomerization of the intersubunit disulfide bond to an SU intrachain disulfide bond is thought to occur upon receptor recognition in order to allow membrane fusion. Post-translationally, the transmembrane protein is palmitoylated. The R-peptide is palmitoylated.

Its subcellular location is the virion membrane. It is found in the host cell membrane. In terms of biological role, the surface protein (SU) attaches the virus to the host cell by binding to its receptor. This interaction triggers the refolding of the transmembrane protein (TM) and is thought to activate its fusogenic potential by unmasking its fusion peptide. Fusion occurs at the host cell plasma membrane. Functionally, the transmembrane protein (TM) acts as a class I viral fusion protein. Under the current model, the protein has at least 3 conformational states: pre-fusion native state, pre-hairpin intermediate state, and post-fusion hairpin state. During viral and target cell membrane fusion, the coiled coil regions (heptad repeats) assume a trimer-of-hairpins structure, positioning the fusion peptide in close proximity to the C-terminal region of the ectodomain. The formation of this structure appears to drive apposition and subsequent fusion of viral and target cell membranes. Membranes fusion leads to delivery of the nucleocapsid into the cytoplasm. The polypeptide is Envelope glycoprotein (env) (Felidae (cat family)).